The primary structure comprises 290 residues: Probable proteasome subunit beta type-6 (290 aa).

Belongs to the peptidase T1B family. As to quaternary structure, the 26S proteasome consists of a 20S proteasome core and two 19S regulatory subunits. The 20S proteasome core is composed of 28 subunits that are arranged in four stacked rings, resulting in a barrel-shaped structure. The two end rings are each formed by seven alpha subunits, and the two central rings are each formed by seven beta subunits. The catalytic chamber with the active sites is on the inside of the barrel.

The protein resides in the cytoplasm. It is found in the nucleus. Functionally, non-catalytic component of the proteasome which degrades poly-ubiquitinated proteins in the cytoplasm and in the nucleus. It is essential for the regulated turnover of proteins and for the removal of misfolded proteins. The proteasome is a multicatalytic proteinase complex that is characterized by its ability to cleave peptides with Arg, Phe, Tyr, Leu, and Glu adjacent to the leaving group at neutral or slightly basic pH. It has an ATP-dependent proteolytic activity. The sequence is that of Probable proteasome subunit beta type-6 (PRE7) from Encephalitozoon cuniculi (strain GB-M1) (Microsporidian parasite).